The sequence spans 589 residues: uncharacterized protein (589 aa).

Disordered stretches follow at residues 328-365, 379-459, 525-555, and 569-589; these read LSST…EDGP, SLLG…DPSN, RSTS…GAVK, and VRGT…SRDM. Polar residues predominate over residues 398-425; it reads VSLSSASTSARPTQRRSSLTPCSQTPQE. Over residues 426–445 the composition is skewed to basic and acidic residues; that stretch reads THQHAREALTTRMESQREAN. Acidic residues predominate over residues 536-545; the sequence is QGDDDDEEDG.

This is an uncharacterized protein from Mycosarcoma maydis (Corn smut fungus).